A 318-amino-acid polypeptide reads, in one-letter code: NADH-ubiquinone oxidoreductase chain 1 (318 aa).

Helical transmembrane passes span 2–22 (PMIN…FLML), 69–89 (ALYI…WTPL), 100–120 (LGLL…LWSG), 147–167 (AIIL…TLIT), 171–191 (HIWL…STLA), 222–242 (LFFM…TMIF), 253–273 (ELYT…FLWI), and 294–314 (LPLT…IASI).

The protein belongs to the complex I subunit 1 family. In terms of assembly, core subunit of respiratory chain NADH dehydrogenase (Complex I) which is composed of 45 different subunits.

Its subcellular location is the mitochondrion inner membrane. The catalysed reaction is a ubiquinone + NADH + 5 H(+)(in) = a ubiquinol + NAD(+) + 4 H(+)(out). Its function is as follows. Core subunit of the mitochondrial membrane respiratory chain NADH dehydrogenase (Complex I) which catalyzes electron transfer from NADH through the respiratory chain, using ubiquinone as an electron acceptor. Essential for the catalytic activity and assembly of complex I. This is NADH-ubiquinone oxidoreductase chain 1 (MT-ND1) from Hylobates lar (Lar gibbon).